We begin with the raw amino-acid sequence, 569 residues long: Alpha-amylase (569 aa).

The N-terminal stretch at 1–28 (MARKTVAAALALVAGAAVAVTGNAPAQA) is a signal peptide. 3 residues coordinate Ca(2+): Asn-120, Gln-166, and Asp-175. The active-site Nucleophile is the Asp-205. Residue His-209 participates in Ca(2+) binding. The active-site Proton donor is the Glu-232. Positions 468–569 (TTPPATSGAS…QLVLNDTFRS (102 aa)) constitute a CBM20 domain.

The protein belongs to the glycosyl hydrolase 13 family. As to quaternary structure, monomer. It depends on Ca(2+) as a cofactor.

It carries out the reaction Endohydrolysis of (1-&gt;4)-alpha-D-glucosidic linkages in polysaccharides containing three or more (1-&gt;4)-alpha-linked D-glucose units.. The chain is Alpha-amylase (aml) from Streptomyces violaceus (Streptomyces venezuelae).